Consider the following 952-residue polypeptide: Ent-kaur-16-ene synthase (952 aa).

6 residues coordinate Mg(2+): Asp-668, Glu-672, Asn-848, Asp-849, Ser-852, and Asp-856. Residues 668-672 carry the DEXXE motif motif; it reads DEYME.

It belongs to the terpene synthase family. It depends on Mg(2+) as a cofactor.

It carries out the reaction ent-copalyl diphosphate = ent-kaur-16-ene + diphosphate. The enzyme catalyses (2E,6E,10E)-geranylgeranyl diphosphate = ent-copalyl diphosphate. The protein operates within plant hormone biosynthesis; gibberellin biosynthesis. Catalyzes the conversion of geranylgeranyl diphosphate to the gibberellin precursor ent-kaurene diphosphate in a two step process. The chain is Ent-kaur-16-ene synthase (cps) from Fusarium fujikuroi (Bakanae and foot rot disease fungus).